A 341-amino-acid polypeptide reads, in one-letter code: Glucokinase (341 aa).

Position 18 to 23 (18 to 23 (GDIGGT)) interacts with ATP.

Belongs to the bacterial glucokinase family.

The protein localises to the cytoplasm. The enzyme catalyses D-glucose + ATP = D-glucose 6-phosphate + ADP + H(+). The chain is Glucokinase from Rhizobium leguminosarum bv. trifolii (strain WSM2304).